We begin with the raw amino-acid sequence, 721 residues long: Polyribonucleotide nucleotidyltransferase (721 aa).

Mg(2+)-binding residues include D495 and D501. The 60-residue stretch at 562–621 (PRLLSFRIDPELIGTVIGPGGRTIKGITERTNTKIDIEDSGIVTIASHDGAAADEAQKII) folds into the KH domain. Residues 631–699 (GEVFSGAITR…NRGRINLTLR (69 aa)) enclose the S1 motif domain. Positions 700-721 (GVPQNGEEAEPAPAPTPVAPLN) are disordered. A compositionally biased stretch (pro residues) spans 711–721 (APAPTPVAPLN).

Belongs to the polyribonucleotide nucleotidyltransferase family. The cofactor is Mg(2+).

It localises to the cytoplasm. It carries out the reaction RNA(n+1) + phosphate = RNA(n) + a ribonucleoside 5'-diphosphate. In terms of biological role, involved in mRNA degradation. Catalyzes the phosphorolysis of single-stranded polyribonucleotides processively in the 3'- to 5'-direction. This chain is Polyribonucleotide nucleotidyltransferase, found in Synechococcus sp. (strain WH7803).